A 688-amino-acid chain; its full sequence is Glycine--tRNA ligase beta subunit (688 aa).

The protein belongs to the class-II aminoacyl-tRNA synthetase family. Tetramer of two alpha and two beta subunits.

The protein resides in the cytoplasm. The catalysed reaction is tRNA(Gly) + glycine + ATP = glycyl-tRNA(Gly) + AMP + diphosphate. The polypeptide is Glycine--tRNA ligase beta subunit (Shewanella sp. (strain MR-7)).